The chain runs to 151 residues: Myosin light polypeptide 6 (151 aa).

An N-acetylcysteine modification is found at C2. The region spanning 7–42 is the EF-hand 1 domain; that stretch reads DQTAEFKEAFQLFDRTGDGKILYSQCGDVMRALGQN. S57 is subject to Phosphoserine. K81 carries the post-translational modification N6-acetyllysine. EF-hand domains are found at residues 84 to 119 and 119 to 151; these read GTYEDYVEGLRVFDKEGNGTVMGAEIRHVLVTLGEK and KMTEEEVEMLVAGHEDSNGCINYEELLRMVLNG.

As to quaternary structure, myosin is a hexamer of 2 heavy chains and 4 light chains. Interacts with SPATA6.

Functionally, regulatory light chain of myosin. Does not bind calcium. The protein is Myosin light polypeptide 6 (Myl6) of Rattus norvegicus (Rat).